The following is a 707-amino-acid chain: MSELDNKKDKSKDSNKKPKKPGAFSIGNIIIFVIVALLLIWVVFAFLPNNPGTNKSFDGFLKDLQDAARLGDDTIFFRNISFDVVLSRFNVTFVNGATTSSYFVNYPSSVAFQNLQIPGTTFTGLELATLAIANTSASGIGTLNFSGLVTPTNQALAILLSLIPTFLFVGIIFFVYKMQSKANGGMGGFNPGKNQAERIYTKIKFSDIAGNEEVKEEVAELVDYLKNPKKYSASGARIPRGILLGGPPGTGKTLLAKATAGEANVPFYFISGSNFVELFVGVGAKRVRELFKEARKSSPAIIFIDELDAVGRSRGAGIGGGNDEREQTLNQLLVEMDGMTENSGLLVMAATNRTDVLDPALLRPGRFDRTVTVGLPNVKDREAILKLHAKGKRISSEVSFQQLAKRTPGYSGAQLENVINEASLLSVREDTKIITLEQFDEAIDRVMSGPAKKSRVITKEELTAVAYHEAGHAVVGTQLRKGVKVQKITIIPRGSAGGYNLMIPEEEKYNSSKSELIAMITSFMGGRAAEQIIYGEKEVSTGARDDIKKATSIARKMVTEWGMSDLGPIMYEEDTSNPFLGRDYTKNQLFSDHIAREIDTEVRKIILTAEQKAIEVIQENREMLELIKEALLENETIVDEEIQYIAKNLKLPSMRTKAKSENVNQIRNVDELVKEVKDQTLIIKDKNDKKIKDSENNIKTDESLDIK.

Over Met-1 to Ser-25 the chain is Cytoplasmic. The chain crosses the membrane as a helical span at residues Ile-26–Phe-46. Over Leu-47–Ala-128 the chain is Extracellular. The helical transmembrane segment at Thr-129 to Val-149 threads the bilayer. At Thr-150 to Lys-707 the chain is on the cytoplasmic side. Gly-246–Thr-253 is a binding site for ATP. Position 468 (His-468) interacts with Zn(2+). Glu-469 is a catalytic residue. His-472 and Asp-546 together coordinate Zn(2+).

In the central section; belongs to the AAA ATPase family. It in the C-terminal section; belongs to the peptidase M41 family. As to quaternary structure, homohexamer. The cofactor is Zn(2+).

It localises to the cell membrane. In terms of biological role, acts as a processive, ATP-dependent zinc metallopeptidase for both cytoplasmic and membrane proteins. Plays a role in the quality control of integral membrane proteins. The protein is ATP-dependent zinc metalloprotease FtsH of Mycoplasma mobile (strain ATCC 43663 / 163K / NCTC 11711) (Mesomycoplasma mobile).